The sequence spans 253 residues: Probable transcriptional regulatory protein Mmar10_2433 (253 aa).

Belongs to the TACO1 family.

The protein resides in the cytoplasm. In Maricaulis maris (strain MCS10) (Caulobacter maris), this protein is Probable transcriptional regulatory protein Mmar10_2433.